The following is a 96-amino-acid chain: Beta-defensin 20 (96 aa).

An N-terminal signal peptide occupies residues 1 to 21; sequence MKLLQVLLVLLFVALADGAQP. 3 disulfide bridges follow: cysteine 24–cysteine 52, cysteine 32–cysteine 46, and cysteine 36–cysteine 53.

It belongs to the beta-defensin family.

Its subcellular location is the secreted. Has antibacterial activity. This is Beta-defensin 20 (Defb20) from Mus musculus (Mouse).